Reading from the N-terminus, the 104-residue chain is Guanyl-specific ribonuclease Ap1 (104 aa).

Cystine bridges form between C2-C10 and C6-C103. Residue H40 is part of the active site. Residue E58 is the Proton acceptor of the active site. The active-site Proton donor is the H92.

The protein belongs to the ribonuclease N1/T1 family.

It is found in the secreted. It catalyses the reaction [RNA] containing guanosine + H2O = an [RNA fragment]-3'-guanosine-3'-phosphate + a 5'-hydroxy-ribonucleotide-3'-[RNA fragment].. The polypeptide is Guanyl-specific ribonuclease Ap1 (Aspergillus pallidus).